The chain runs to 231 residues: Probable septum site-determining protein MinC (231 aa).

Belongs to the MinC family. In terms of assembly, interacts with MinD and FtsZ.

Functionally, cell division inhibitor that blocks the formation of polar Z ring septums. Rapidly oscillates between the poles of the cell to destabilize FtsZ filaments that have formed before they mature into polar Z rings. Prevents FtsZ polymerization. This is Probable septum site-determining protein MinC from Bradyrhizobium diazoefficiens (strain JCM 10833 / BCRC 13528 / IAM 13628 / NBRC 14792 / USDA 110).